The sequence spans 275 residues: Serine/threonine-protein phosphatase PGAM5, mitochondrial (275 aa).

A helical transmembrane segment spans residues Leu7–Gly24.

Belongs to the phosphoglycerate mutase family. BPG-dependent PGAM subfamily. Post-translationally, phosphorylated by the RIPK1/RIPK3 complex under necrotic conditions. This phosphorylation increases PGAM5 phosphatase activity.

It is found in the mitochondrion outer membrane. It catalyses the reaction O-phospho-L-seryl-[protein] + H2O = L-seryl-[protein] + phosphate. It carries out the reaction O-phospho-L-threonyl-[protein] + H2O = L-threonyl-[protein] + phosphate. Displays phosphatase activity for serine/threonine residues. Has apparently no phosphoglycerate mutase activity. May be regulator of mitochondrial dynamics. May be a central mediator for programmed necrosis. This chain is Serine/threonine-protein phosphatase PGAM5, mitochondrial (pgam5), found in Xenopus laevis (African clawed frog).